The following is a 240-amino-acid chain: uncharacterized protein (240 aa).

Disordered regions lie at residues glutamate 99 to leucine 121 and alanine 136 to histidine 167. The segment covering threonine 137–serine 155 has biased composition (polar residues).

This is an uncharacterized protein from Ictaluridae (bullhead catfishes).